The following is a 311-amino-acid chain: Fucose-specific lectin (311 aa).

6 consecutive repeat copies span residues 1–53, 54–103, 104–151, 152–209, 210–256, and 257–311. Residues 1–311 are 6 X approximate tandem repeats; sequence MSTPGAQEVL…LGRRALPPAE (311 aa). Residues arginine 25, glutamate 37, tryptophan 44, arginine 73, glutamate 85, tryptophan 94, arginine 126, glutamate 138, tryptophan 146, arginine 177, glutamine 189, tryptophan 198, arginine 230, glutamine 242, arginine 277, and glutamate 291 each coordinate beta-L-fucose.

This sequence belongs to the fungal fucose-specific lectin family. In terms of assembly, homodimer.

In terms of biological role, lectin that specifically binds to L-fucose and weakly reacts with mannose and N-acetyl-neuraminic acid. Has strongest preference for the alpha-1,6-fucosylated chain (core fucose) on glycoproteins among alpha-1,2-, alpha-1,3-, alpha-1,4-, and alpha-1,6-fucosylated chains. Binds to fucose residues of IgE in mice and human, causing antigen-independent IgE-mediated mast cell activation and anaphylactoid reactions in mice and is possibly implicated in allergic response to Aspergillus oryzae in humans. Induces secretion of pro-inflammatory cytokines IL6 and IL8 implicated in ocular diseases such as mycotic keratitis, probably through its interaction with host toll-like receptors TLR2 and TLR4, followed by up-regulation of pro-inflammatory cytokines. The protein is Fucose-specific lectin of Aspergillus oryzae (strain ATCC 42149 / RIB 40) (Yellow koji mold).